The following is a 124-amino-acid chain: Small ribosomal subunit protein bS6 (124 aa).

The tract at residues K100 to N124 is disordered. Over residues G110–N124 the composition is skewed to polar residues.

It belongs to the bacterial ribosomal protein bS6 family.

Its function is as follows. Binds together with bS18 to 16S ribosomal RNA. The sequence is that of Small ribosomal subunit protein bS6 from Fervidobacterium nodosum (strain ATCC 35602 / DSM 5306 / Rt17-B1).